A 552-amino-acid polypeptide reads, in one-letter code: Elongator complex protein 3 (552 aa).

In terms of domain architecture, Radical SAM core spans 84–374 (RTASGIAVVA…YRVQRDIPMP (291 aa)). Cys-101, Cys-111, and Cys-114 together coordinate [4Fe-4S] cluster. Residues Lys-166, 476–479 (ELHV), 499–501 (FGM), and Tyr-532 contribute to the acetyl-CoA site. Residues 398–552 (TTCRDVRTRE…YMSKSIEENN (155 aa)) enclose the N-acetyltransferase domain.

The protein belongs to the ELP3 family. As to quaternary structure, component of the elongator complex composed of Elp1, Elp2, Elp3, Elp4, Elp5 and Elp6. The elongator complex associates with and stabilizes microtubules; efficient interaction requires the full complex. Requires [4Fe-4S] cluster as cofactor.

Its subcellular location is the cytoplasm. It is found in the nucleus. It localises to the cytoskeleton. The protein resides in the spindle. It carries out the reaction uridine(34) in tRNA + acetyl-CoA + S-adenosyl-L-methionine + H2O = 5-(carboxymethyl)uridine(34) in tRNA + 5'-deoxyadenosine + L-methionine + CoA + 2 H(+). It functions in the pathway tRNA modification; 5-methoxycarbonylmethyl-2-thiouridine-tRNA biosynthesis. Functionally, catalytic tRNA acetyltransferase subunit of the elongator complex, which is required for multiple tRNA modifications, including mcm5U (5-methoxycarbonylmethyl uridine), mcm5s2U (5-methoxycarbonylmethyl-2-thiouridine), and ncm5U (5-carbamoylmethyl uridine). In the elongator complex, acts as a tRNA uridine(34) acetyltransferase by mediating formation of carboxymethyluridine in the wobble base at position 34 in tRNAs. Binding by the elongator complex stabilizes microtubules and promotes their growth. This induces central spindle asymmetry, promoting polarized signaling endosome trafficking during asymmetric cell division and cell fate assignation of sensory organ precursor cells. Plays a role in the control of synaptic bouton expansion. Required for larval development. Involved in protein synthesis-dependent long-term memory formation, probably as part of the elongator complex. In Drosophila melanogaster (Fruit fly), this protein is Elongator complex protein 3.